A 683-amino-acid chain; its full sequence is Protein hook (683 aa).

The 119-residue stretch at 5–123 folds into the Calponin-homology (CH) domain; the sequence is NGMYYSLLEW…RLLQLVLGCA (119 aa). Coiled coils occupy residues 135–440 and 484–594; these read EIMC…LKCG and QTAL…AKEV.

The protein belongs to the hook family. As to quaternary structure, homodimer. Interacts with microtubules via its N-terminus.

The protein resides in the cytoplasm. It localises to the cytoskeleton. Its subcellular location is the endosome. The protein localises to the synapse. Its function is as follows. Involved in endocytic trafficking by stabilizing organelles of the endocytic pathway. Probably acts as a cytoskeletal linker protein required to tether endosome vesicles to the cytoskeleton. Involved in modulation of endocytosis at stages required for down-regulation of membrane proteins that control synapse size. Not involved in synaptic vesicle recycling. Required in R7 cells for boss endocytosis into multivesicular bodies (MVBs). Has a role in regulating adult longevity. The chain is Protein hook from Drosophila grimshawi (Hawaiian fruit fly).